The following is a 280-amino-acid chain: Pantothenate synthetase (280 aa).

26 to 33 (MGNLHDGH) is an ATP binding site. H33 (proton donor) is an active-site residue. Q57 is a (R)-pantoate binding site. Q57 is a binding site for beta-alanine. 147–150 (GKKD) is an ATP binding site. (R)-pantoate is bound at residue Q153. Position 184–187 (184–187 (LSSR)) interacts with ATP.

This sequence belongs to the pantothenate synthetase family. Homodimer.

The protein localises to the cytoplasm. The enzyme catalyses (R)-pantoate + beta-alanine + ATP = (R)-pantothenate + AMP + diphosphate + H(+). The protein operates within cofactor biosynthesis; (R)-pantothenate biosynthesis; (R)-pantothenate from (R)-pantoate and beta-alanine: step 1/1. Its function is as follows. Catalyzes the condensation of pantoate with beta-alanine in an ATP-dependent reaction via a pantoyl-adenylate intermediate. The polypeptide is Pantothenate synthetase (Verminephrobacter eiseniae (strain EF01-2)).